Reading from the N-terminus, the 367-residue chain is Splicing factor U2AF-associated protein 2 (367 aa).

The tract at residues 36-104 (YDPNSLKMNK…SKSENSEASP (69 aa)) is disordered. Basic and acidic residues predominate over residues 61-78 (TEGKESSNGEDRHTKRLY). RRM domains follow at residues 112–193 (VYIQ…KMRV) and 268–329 (LLID…VVEA).

The protein belongs to the HTATSF1 family. As to quaternary structure, interacts with the U2AF large and U2AF small subunits.

In terms of biological role, has a role in pre-mRNA splicing. This is Splicing factor U2AF-associated protein 2 (uap2) from Schizosaccharomyces pombe (strain 972 / ATCC 24843) (Fission yeast).